We begin with the raw amino-acid sequence, 345 residues long: Dihydroorotase (345 aa).

2 residues coordinate Zn(2+): His13 and His15. Residues His15–Arg17 and Asn41 contribute to the substrate site. 3 residues coordinate Zn(2+): Lys100, His137, and His175. An N6-carboxylysine modification is found at Lys100. Residue His137 participates in substrate binding. Residue Leu220 coordinates substrate. Zn(2+) is bound at residue Asp248. The active site involves Asp248. The substrate site is built by His252 and Ala264.

Belongs to the metallo-dependent hydrolases superfamily. DHOase family. Class II DHOase subfamily. As to quaternary structure, homodimer. The cofactor is Zn(2+).

It catalyses the reaction (S)-dihydroorotate + H2O = N-carbamoyl-L-aspartate + H(+). It participates in pyrimidine metabolism; UMP biosynthesis via de novo pathway; (S)-dihydroorotate from bicarbonate: step 3/3. Its function is as follows. Catalyzes the reversible cyclization of carbamoyl aspartate to dihydroorotate. This is Dihydroorotase from Laribacter hongkongensis (strain HLHK9).